Consider the following 477-residue polypeptide: MTTNTGKVTQIIGPVIDITFPIEAMSSVNIYDAVVIEDKTEKLSVTCEIQQLIGSQSVRTVSMSSTDRIKRGMDVVQTGTAIAVPVGKSTLRRIFNVLGQPIDNLGDVKNEETRPIHRSAPEFVDLDIRLEIFETGIKVIDLLAPYRRGGKVGLFGGAGVGKTVLIMELINNIAKAHGGVSVFAGVGERTREGNDLYAEMKESGVIVEDNLLESKVTLVYGQMNEPPGARMRVGLAALTMAEFFRDSSKQDVLLFIDNVFRFVQAGSEVSALLGRMPSAVGYQPTLATEMGGLQERITSTKDGSITSIQAVYVPADDLTDPAAATTFAHLDATTVLSRGLASKGIYPAVDPLGSTSTMLQPWIVGDSHYECAQKVKQTLQRYKELQDIIAILGLEELSEEDRLTVDRARKIERFLSQPFFVAEIFTGLAGKYVGLNETIFGFNKILSGDLDSYNEQAFYLVGNLTDAEGKMKTISEN.

ATP is bound at residue 156–163 (GGAGVGKT).

This sequence belongs to the ATPase alpha/beta chains family. F-type ATPases have 2 components, CF(1) - the catalytic core - and CF(0) - the membrane proton channel. CF(1) has five subunits: alpha(3), beta(3), gamma(1), delta(1), epsilon(1). CF(0) has four main subunits: a(1), b(1), b'(1) and c(9-12).

It is found in the plastid. The protein localises to the chloroplast thylakoid membrane. It carries out the reaction ATP + H2O + 4 H(+)(in) = ADP + phosphate + 5 H(+)(out). Functionally, produces ATP from ADP in the presence of a proton gradient across the membrane. The catalytic sites are hosted primarily by the beta subunits. In Bigelowiella natans (Pedinomonas minutissima), this protein is ATP synthase subunit beta, chloroplastic.